Reading from the N-terminus, the 739-residue chain is Adenosylcobalamin-dependent ribonucleoside-triphosphate reductase (739 aa).

Residues cysteine 119 and cysteine 419 are joined by a disulfide bond. Positions 147–158 are effector region-1; the sequence is SMPFSFLFDELM. The segment at 168-313 is effector region-2; the sequence is ARSNISQIPR…ICNLIGKAVV (146 aa). Catalysis depends on residues cysteine 408 and glutamate 410. Residues 565–626 are adenosylcobalamin-binding-1; sequence FHYGAYLIQR…NPNFASAGTV (62 aa). An adenosylcobalamin-binding-2 region spans residues 685 to 724; the sequence is LQQAPKEPIDKETYEKRSQEITGNVEEVFSQLNSDVKDLE.

It belongs to the class II ribonucleoside-triphosphate reductase family. Monomer. Adenosylcob(III)alamin serves as cofactor.

It carries out the reaction a 2'-deoxyribonucleoside 5'-triphosphate + [thioredoxin]-disulfide + H2O = a ribonucleoside 5'-triphosphate + [thioredoxin]-dithiol. With respect to regulation, allosterically regulated by ATP and dNTP. The polypeptide is Adenosylcobalamin-dependent ribonucleoside-triphosphate reductase (rtpR) (Lactobacillus delbrueckii subsp. bulgaricus (strain ATCC BAA-365 / Lb-18)).